Reading from the N-terminus, the 185-residue chain is Probable chorismate pyruvate-lyase 1 (185 aa).

Positions 68, 106, and 164 each coordinate substrate.

It belongs to the UbiC family.

Its subcellular location is the cytoplasm. The catalysed reaction is chorismate = 4-hydroxybenzoate + pyruvate. It participates in cofactor biosynthesis; ubiquinone biosynthesis. In terms of biological role, removes the pyruvyl group from chorismate, with concomitant aromatization of the ring, to provide 4-hydroxybenzoate (4HB) for the ubiquinone pathway. This chain is Probable chorismate pyruvate-lyase 1, found in Pseudomonas entomophila (strain L48).